We begin with the raw amino-acid sequence, 175 residues long: DDB1- and CUL4-associated factor 16 (175 aa).

Residues 1-42 (MGPRNPSPDPLSESESEEEENTNYLNESSGEEWDSSEEEDPV) are disordered. Acidic residues-rich tracts occupy residues 12 to 21 (SESESEEEEN) and 29 to 41 (SGEE…EEDP). Lys-61 is subject to N6-acetyllysine.

Interacts with DDB1 and CUL4A.

It is found in the nucleus. Its pathway is protein modification; protein ubiquitination. Its function is as follows. Functions as a substrate recognition component for CUL4-DDB1 E3 ubiquitin-protein ligase complex, which mediates ubiquitination and proteasome-dependent degradation of nuclear proteins. The sequence is that of DDB1- and CUL4-associated factor 16 (DCAF16) from Bos taurus (Bovine).